The sequence spans 457 residues: Acetylcholine receptor subunit alpha (457 aa).

The first 20 residues, 1–20 (MELTAVLLLLGLCSAGTVLG), serve as a signal peptide directing secretion. Residues 21 to 230 (SEHETRLVAK…ITYHFVMQRL (210 aa)) are Extracellular-facing. Disulfide bonds link cysteine 148–cysteine 162 and cysteine 212–cysteine 213. N-linked (GlcNAc...) asparagine glycosylation occurs at asparagine 161. 3 consecutive transmembrane segments (helical) span residues 231 to 255 (PLYFIVNVIIPCLLFSFLTSLVFYL), 263 to 281 (MTLSISVLLSLTVFLLVIV), and 297 to 316 (YMLFTMVFVIASIIITVIVI). Over 317-428 (NTHHRSPSTH…WKYVAMVMDH (112 aa)) the chain is Cytoplasmic. The chain crosses the membrane as a helical span at residues 429–447 (ILLGVFMLVCLIGTLAVFA).

This sequence belongs to the ligand-gated ion channel (TC 1.A.9) family. Acetylcholine receptor (TC 1.A.9.1) subfamily. Alpha-1/CHRNA1 sub-subfamily. One of the alpha chains that assemble within the acetylcholine receptor, a pentamer of two alpha chains, a beta, a delta, and a gamma (in immature muscle) or epsilon (in mature muscle) chains. The muscle heteropentamer composed of alpha-1, beta-1, delta, epsilon subunits interacts with the alpha-conotoxin ImII.

The protein resides in the postsynaptic cell membrane. It localises to the cell membrane. The catalysed reaction is K(+)(in) = K(+)(out). It carries out the reaction Na(+)(in) = Na(+)(out). Functionally, upon acetylcholine binding, the AChR responds by an extensive change in conformation that affects all subunits and leads to opening of an ion-conducting channel across the plasma membrane. This is Acetylcholine receptor subunit alpha (Chrna1) from Rattus norvegicus (Rat).